The following is a 126-amino-acid chain: Aspartate 1-decarboxylase (126 aa).

The active-site Schiff-base intermediate with substrate; via pyruvic acid is the serine 25. Serine 25 is subject to Pyruvic acid (Ser). A substrate-binding site is contributed by threonine 57. The active-site Proton donor is the tyrosine 58. 73–75 contacts substrate; that stretch reads GAA.

This sequence belongs to the PanD family. Heterooctamer of four alpha and four beta subunits. The cofactor is pyruvate. Post-translationally, is synthesized initially as an inactive proenzyme, which is activated by self-cleavage at a specific serine bond to produce a beta-subunit with a hydroxyl group at its C-terminus and an alpha-subunit with a pyruvoyl group at its N-terminus.

Its subcellular location is the cytoplasm. The catalysed reaction is L-aspartate + H(+) = beta-alanine + CO2. The protein operates within cofactor biosynthesis; (R)-pantothenate biosynthesis; beta-alanine from L-aspartate: step 1/1. Its function is as follows. Catalyzes the pyruvoyl-dependent decarboxylation of aspartate to produce beta-alanine. This is Aspartate 1-decarboxylase from Stutzerimonas stutzeri (strain A1501) (Pseudomonas stutzeri).